Here is a 493-residue protein sequence, read N- to C-terminus: UDP-glucose 6-dehydrogenase (493 aa).

NAD(+)-binding positions include 11–16 (GAGYVG), Asp-36, Arg-41, and 89–93 (VNTPT). The interval 88 to 110 (SVNTPTKTYGMGKGRAADLKYIE) is disordered. An N6-acetyllysine modification is found at Lys-107. The segment at 129–135 (KSTVPVR) is allosteric switch region. 130–132 (STV) serves as a coordination point for NAD(+). The active-site Proton donor/acceptor is the Glu-161. Residues 161–165 (EFLAE), 220–224 (KLAAN), Arg-260, and 267–273 (KASVGFG) contribute to the substrate site. Glu-165 serves as a coordination point for NAD(+). Lys-220 (proton donor/acceptor) is an active-site residue. The active-site Nucleophile is the Cys-276. Position 276 to 279 (276 to 279 (CFQK)) interacts with NAD(+). Residues 321–325 (SLFNT) form an important for formation of active hexamer structure region. Residue 338–339 (FK) coordinates substrate. Arg-346 is an NAD(+) binding site. Arg-442 is a substrate binding site. The disordered stretch occupies residues 466–493 (VSSKRIPYTPGEIPKFSLQDPPNKKPKV). Thr-474 is modified (phosphothreonine).

It belongs to the UDP-glucose/GDP-mannose dehydrogenase family. In terms of assembly, homohexamer.

The catalysed reaction is UDP-alpha-D-glucose + 2 NAD(+) + H2O = UDP-alpha-D-glucuronate + 2 NADH + 3 H(+). It participates in nucleotide-sugar biosynthesis; UDP-alpha-D-glucuronate biosynthesis; UDP-alpha-D-glucuronate from UDP-alpha-D-glucose: step 1/1. Its activity is regulated as follows. UDP-alpha-D-xylose (UDX) acts as a feedback inhibitor. It binds at the same site as the substrate, but functions as allosteric inhibitor by triggering a conformation change that disrupts the active hexameric ring structure and gives rise to an inactive, horseshoe-shaped hexamer. Catalyzes the formation of UDP-alpha-D-glucuronate, a constituent of complex glycosaminoglycans. Required for the biosynthesis of chondroitin sulfate and heparan sulfate. Required for embryonic development via its role in the biosynthesis of glycosaminoglycans. Required for proper brain and neuronal development. The chain is UDP-glucose 6-dehydrogenase (Ugdh) from Rattus norvegicus (Rat).